Consider the following 296-residue polypeptide: Acetylglutamate kinase (296 aa).

Substrate-binding positions include 65-66 (GG), Arg-87, and Asn-190.

Belongs to the acetylglutamate kinase family. ArgB subfamily.

Its subcellular location is the cytoplasm. The enzyme catalyses N-acetyl-L-glutamate + ATP = N-acetyl-L-glutamyl 5-phosphate + ADP. The protein operates within amino-acid biosynthesis; L-arginine biosynthesis; N(2)-acetyl-L-ornithine from L-glutamate: step 2/4. Catalyzes the ATP-dependent phosphorylation of N-acetyl-L-glutamate. The sequence is that of Acetylglutamate kinase from Moorella thermoacetica (strain ATCC 39073 / JCM 9320).